The following is a 382-amino-acid chain: Galactokinase (382 aa).

34–37 contacts substrate; it reads EHTD. 124 to 130 contacts ATP; sequence GAGLSSS. Residues serine 130 and glutamate 162 each coordinate Mg(2+). Aspartate 174 functions as the Proton acceptor in the catalytic mechanism. Tyrosine 223 serves as a coordination point for substrate.

It belongs to the GHMP kinase family. GalK subfamily.

Its subcellular location is the cytoplasm. The enzyme catalyses alpha-D-galactose + ATP = alpha-D-galactose 1-phosphate + ADP + H(+). It participates in carbohydrate metabolism; galactose metabolism. Functionally, catalyzes the transfer of the gamma-phosphate of ATP to D-galactose to form alpha-D-galactose-1-phosphate (Gal-1-P). This is Galactokinase from Escherichia coli O9:H4 (strain HS).